Consider the following 511-residue polypeptide: Glycoprotein (511 aa).

Residues 1–16 (MKCLLYLAFLFIGVNC) form the signal peptide. The Virion surface portion of the chain corresponds to 17–467 (KFTIVFPHNQ…FSSWKSSIAS (451 aa)). The trimerization stretch occupies residues 18–35 (FTIVFPHNQKGNWKNVPS). Intrachain disulfides connect Cys40–Cys300, Cys75–Cys108, Cys84–Cys130, Cys169–Cys174, Cys193–Cys240, and Cys235–Cys269. Positions 53 to 172 (IGTAIQVKMP…QFINGKCSNY (120 aa)) are fusion peptide. The N-linked (GlcNAc...) asparagine; by host glycan is linked to Asn179. Positions 259–309 (DLFAAARFPECPEGSSISAPSQTSVDVSLIQDVERILDYSLCQETWSKIRA) are trimerization. N-linked (GlcNAc...) asparagine; by host glycosylation occurs at Asn336. A trimerization region spans residues 383-405 (EIGPNGVLRTSSGYKFPLYMIGH). A helical membrane pass occupies residues 468–488 (FFFIIGLIIGLFLVLRVGIHL). Cys489 carries the S-palmitoyl cysteine; by host lipid modification. Over 489 to 511 (CIKLKHTKKRQIYTDIEMNRLGK) the chain is Intravirion. A basolateral targeting ex vivo motif is present at residues 496 to 506 (KKRQIYTDIEM).

This sequence belongs to the vesiculovirus glycoprotein family. Homotrimer. Interacts with host LDL at target cell surface. In terms of processing, glycosylated by host. Palmitoylated by host.

It is found in the virion membrane. The protein localises to the host membrane. In terms of biological role, attaches the virus to host LDL receptors, inducing clathrin-dependent endocytosis of the virion. In the endosome, the acidic pH induces conformational changes in the glycoprotein trimer, which trigger fusion between virus and endosomal membrane. This chain is Glycoprotein (G), found in Aedes (Bovine).